The following is a 559-amino-acid chain: Glycerol kinase (559 aa).

ADP is bound at residue Thr20. 3 residues coordinate ATP: Thr20, Ser21, and Ser22. Thr20 contacts sn-glycerol 3-phosphate. Residue Arg24 coordinates ADP. Sn-glycerol 3-phosphate-binding residues include Arg94, Glu95, and Tyr148. Arg94, Glu95, and Tyr148 together coordinate glycerol. Gly252 contacts beta-D-fructose 1,6-bisphosphate. Residue Asp265 coordinates sn-glycerol 3-phosphate. Positions 265 and 266 each coordinate glycerol. ADP-binding residues include Thr287, Gly332, Gly433, and Asn437. Positions 287, 332, and 433 each coordinate ATP. Residues 532 to 552 (IFCSLPLGFFIVSSMVMLIGA) traverse the membrane as a helical segment.

This sequence belongs to the FGGY kinase family. As to expression, widely expressed in fetal and adult tissues. In terms of tissue distribution, the sole isoform expressed in adult liver and kidney.

The protein resides in the mitochondrion outer membrane. Its subcellular location is the nucleus. It localises to the cytoplasm. It is found in the cytosol. It catalyses the reaction glycerol + ATP = sn-glycerol 3-phosphate + ADP + H(+). Its pathway is polyol metabolism; glycerol degradation via glycerol kinase pathway; sn-glycerol 3-phosphate from glycerol: step 1/1. Potassium and magnesium-dependent. In terms of biological role, kinase that plays a key role in glycerol metabolism, catalyzing its phosphorylation to produce sn-glycerol 3-phosphate. Sn-glycerol 3-phosphate is a crucial intermediate in various metabolic pathways, such as the synthesis of glycerolipids and triglycerides, glycogenesis, glycolysis and gluconeogenesis. The sequence is that of Glycerol kinase from Homo sapiens (Human).